The sequence spans 317 residues: Olfactory receptor 10A5 (317 aa).

Topologically, residues 1–26 are extracellular; it reads MAIGNWTEISEFILMSFSSLPTEIQS. N5 carries N-linked (GlcNAc...) asparagine glycosylation. The helical transmembrane segment at 27–47 threads the bilayer; that stretch reads LLFLTFLTIYLVTLKGNSLII. Topologically, residues 48–55 are cytoplasmic; that stretch reads LVTLADPM. Residues 56–76 traverse the membrane as a helical segment; it reads LHSPMYFFLRNLSFLEIGFNL. Topologically, residues 77 to 100 are extracellular; the sequence is VIVPKMLGTLLAQDTTISFLGCAT. C98 and C190 are disulfide-bonded. A helical transmembrane segment spans residues 101–121; the sequence is QMYFFFFFGVAECFLLATMAY. At 122 to 140 the chain is on the cytoplasmic side; sequence DRYVAICSPLHYPVIMNQR. The helical transmembrane segment at 141-161 threads the bilayer; that stretch reads TRAKLAAASWFPGFPVATVQT. Residues 162–198 are Extracellular-facing; it reads TWLFSFPFCGTNKVNHFFCDSPPVLKLVCADTALFEI. A helical membrane pass occupies residues 199 to 218; sequence YAIVGTILVVMIPCLLILCS. The Cytoplasmic portion of the chain corresponds to 219-238; sequence YTRIAAAILKIPSAKGKHKA. The helical transmembrane segment at 239 to 259 threads the bilayer; the sequence is FSTCSSHLLVVSLFYISSSLT. Over 260-272 the chain is Extracellular; it reads YFWPKSNNSPESK. A helical membrane pass occupies residues 273 to 293; the sequence is KLLSLSYTVVTPMLNPIIYSL. The Cytoplasmic portion of the chain corresponds to 294 to 317; it reads RNSEVKNALSRTFHKVLALRNCIP.

This sequence belongs to the G-protein coupled receptor 1 family. As to expression, expressed in the tongue.

The protein resides in the cell membrane. In terms of biological role, odorant receptor (Potential). May be involved in taste perception. The sequence is that of Olfactory receptor 10A5 (OR10A5) from Homo sapiens (Human).